Here is a 711-residue protein sequence, read N- to C-terminus: Polyribonucleotide nucleotidyltransferase (711 aa).

Positions 486 and 492 each coordinate Mg(2+). Positions 553-612 (PRIHTIKINPDKIKDVIGKGGSVIRALTEETGTTIEIEDDGTVKIAATDGEKAKHAIRRI) constitute a KH domain. Residues 622-690 (GRVYTGKVTR…RQGRIRLSIK (69 aa)) form the S1 motif domain. The interval 689 to 711 (IKEATEQSQPAAAPEAPAAEQGE) is disordered. Positions 694 to 711 (EQSQPAAAPEAPAAEQGE) are enriched in low complexity.

The protein belongs to the polyribonucleotide nucleotidyltransferase family. As to quaternary structure, component of the RNA degradosome, which is a multiprotein complex involved in RNA processing and mRNA degradation. It depends on Mg(2+) as a cofactor.

Its subcellular location is the cytoplasm. The enzyme catalyses RNA(n+1) + phosphate = RNA(n) + a ribonucleoside 5'-diphosphate. Functionally, involved in mRNA degradation. Catalyzes the phosphorolysis of single-stranded polyribonucleotides processively in the 3'- to 5'-direction. The sequence is that of Polyribonucleotide nucleotidyltransferase from Escherichia coli (strain SE11).